Here is a 375-residue protein sequence, read N- to C-terminus: Growth/differentiation factor 8 (375 aa).

The signal sequence occupies residues 1 to 18; that stretch reads MQKLQIFVYIYLFMLTVA. Positions 19–266 are excised as a propeptide; that stretch reads GPVDLNENSE…VTDTPKRARR (248 aa). Residues asparagine 48 and asparagine 71 are each glycosylated (N-linked (GlcNAc...) asparagine). Disulfide bonds link cysteine 272–cysteine 282, cysteine 281–cysteine 340, cysteine 309–cysteine 372, and cysteine 313–cysteine 374.

It belongs to the TGF-beta family. As to quaternary structure, homodimer; disulfide-linked. Interacts with WFIKKN2, leading to inhibit its activity. Interacts with FSTL3. Synthesized as large precursor molecule that undergoes proteolytic cleavage to generate an N-terminal propeptide and a disulfide linked C-terminal dimer, which is the biologically active molecule. The circulating form consists of a latent complex of the C-terminal dimer and other proteins, including its propeptide, which maintain the C-terminal dimer in a latent, inactive state. Ligand activation requires additional cleavage of the prodomain by a tolloid-like metalloproteinase.

The protein resides in the secreted. Acts specifically as a negative regulator of skeletal muscle growth. The chain is Growth/differentiation factor 8 (MSTN) from Sylvicapra grimmia (Grey duiker).